The following is a 1040-amino-acid chain: Multidrug resistance protein MdtB (1040 aa).

The next 12 helical transmembrane spans lie at 16-36 (FIMR…AGII), 342-362 (DTQF…YLFL), 369-389 (IIPG…MVFL), 396-416 (LTLM…IVVI), 440-460 (IGFT…PLLF), 472-492 (FAVT…TLTP), 537-557 (WLTL…WVFI), 863-883 (LGST…VLGV), 888-908 (FIHP…ALLA), 911-931 (LAGS…IGIV), 968-988 (ILMT…STGV), and 998-1018 (IGMV…TPVI).

Belongs to the resistance-nodulation-cell division (RND) (TC 2.A.6) family. MdtB subfamily. As to quaternary structure, part of a tripartite efflux system composed of MdtA, MdtB and MdtC. MdtB forms a heteromultimer with MdtC.

It localises to the cell inner membrane. This is Multidrug resistance protein MdtB from Klebsiella pneumoniae subsp. pneumoniae (strain ATCC 700721 / MGH 78578).